Reading from the N-terminus, the 230-residue chain is Esterase OVCA2 (230 aa).

Residues Ser124, Asp182, and His209 each act as charge relay system in the active site.

This sequence belongs to the LovG family.

The catalysed reaction is a carboxylic ester + H2O = an alcohol + a carboxylate + H(+). Functionally, exhibits ester hydrolase activity with a strong preference for long-chain alkyl ester substrates and high selectivity against a variety of short, branched, and substituted esters. Is able to hydrolyze ester bonds within a wide range of p-nitrophenyl derivatives (C2-C14) in vitro, with a strong preference toward substrates of &gt;8 carbons. The chain is Esterase OVCA2 (ovca2) from Xenopus tropicalis (Western clawed frog).